The sequence spans 208 residues: Small ribosomal subunit protein uS4 (208 aa).

A disordered region spans residues 24–52 (GVKPFDVKTKKANKAPGQHGQARGGKQSE). One can recognise an S4 RNA-binding domain in the interval 98 to 160 (SRLDNVVYRM…AKQQLRIKNA (63 aa)).

This sequence belongs to the universal ribosomal protein uS4 family. In terms of assembly, part of the 30S ribosomal subunit. Contacts protein S5. The interaction surface between S4 and S5 is involved in control of translational fidelity.

In terms of biological role, one of the primary rRNA binding proteins, it binds directly to 16S rRNA where it nucleates assembly of the body of the 30S subunit. Its function is as follows. With S5 and S12 plays an important role in translational accuracy. This is Small ribosomal subunit protein uS4 from Acinetobacter baumannii (strain ACICU).